Consider the following 632-residue polypeptide: Chaperone protein HtpG (632 aa).

The tract at residues 1 to 339 is a; substrate-binding; it reads MAHETMSFQA…SADLPLNVSR (339 aa). Residues 340–559 are b; that stretch reads EILQESRDVK…DNDMSGYLQR (220 aa). The segment at 560-632 is c; sequence MLKAAGQNAP…TNALLLSRAA (73 aa).

Belongs to the heat shock protein 90 family. Homodimer.

Its subcellular location is the cytoplasm. Its function is as follows. Molecular chaperone. Has ATPase activity. The protein is Chaperone protein HtpG of Burkholderia ambifaria (strain ATCC BAA-244 / DSM 16087 / CCUG 44356 / LMG 19182 / AMMD) (Burkholderia cepacia (strain AMMD)).